The following is a 256-amino-acid chain: Pimeloyl-[acyl-carrier protein] methyl ester esterase (256 aa).

The region spanning 15–242 (HLVLLHGWGL…AAHAPFISHP (228 aa)) is the AB hydrolase-1 domain. Substrate-binding positions include tryptophan 22, 82-83 (SL), and 143-147 (FLALQ). Serine 82 functions as the Nucleophile in the catalytic mechanism. Catalysis depends on residues aspartate 207 and histidine 235. Histidine 235 lines the substrate pocket.

It belongs to the AB hydrolase superfamily. Carboxylesterase BioH family. As to quaternary structure, monomer.

The protein localises to the cytoplasm. The enzyme catalyses 6-carboxyhexanoyl-[ACP] methyl ester + H2O = 6-carboxyhexanoyl-[ACP] + methanol + H(+). It functions in the pathway cofactor biosynthesis; biotin biosynthesis. In terms of biological role, the physiological role of BioH is to remove the methyl group introduced by BioC when the pimeloyl moiety is complete. It allows to synthesize pimeloyl-ACP via the fatty acid synthetic pathway through the hydrolysis of the ester bonds of pimeloyl-ACP esters. This Escherichia coli O127:H6 (strain E2348/69 / EPEC) protein is Pimeloyl-[acyl-carrier protein] methyl ester esterase.